The following is a 263-amino-acid chain: MSTPSPQLLVAAAQQTLGMGKRRGPPRAVCLHLAGEVLAVARGLKPALLYDCSSAGAPEIQSYLEKLRGLGFPTQGLHVLEIAENSLIVHPEYVRRHLEQVLLGSIAFVDVSGSQPYPAVCSLDQLQDFKALVVEIITHLQGLQRDRSLAVSCSRLCSSAWNLCTVFGILLGYPVPYTFHENQGEDNCLAQTPLRVFTARISWLCCQPPVLLYSFSVPESLFLSLRDILNTWEKDLRTRCRTQNDFADLSISSEIVTLPAVAL.

Belongs to the UPF0739 family.

The polypeptide is UPF0739 protein C1orf74 homolog (Bos taurus (Bovine)).